A 272-amino-acid polypeptide reads, in one-letter code: Proteasome subunit beta type-5 (272 aa).

A propeptide spans Met1 to Gly62 (removed in mature form). The active-site Nucleophile is Thr63.

The protein belongs to the peptidase T1B family. As to quaternary structure, the 26S proteasome consists of a 20S proteasome core and two 19S regulatory subunits. The 20S proteasome core is composed of 28 subunits that are arranged in four stacked rings, resulting in a barrel-shaped structure. The two end rings are each formed by seven alpha subunits, and the two central rings are each formed by seven beta subunits. The catalytic chamber with the active sites is on the inside of the barrel.

The protein localises to the cytoplasm. Its subcellular location is the nucleus. The catalysed reaction is Cleavage of peptide bonds with very broad specificity.. The proteasome is a multicatalytic proteinase complex which is characterized by its ability to cleave peptides with Arg, Phe, Tyr, Leu, and Glu adjacent to the leaving group at neutral or slightly basic pH. The proteasome has an ATP-dependent proteolytic activity. The chain is Proteasome subunit beta type-5 (psmB5) from Dictyostelium discoideum (Social amoeba).